A 121-amino-acid chain; its full sequence is Holo-[acyl-carrier-protein] synthase (121 aa).

2 residues coordinate Mg(2+): Asp-6 and Glu-55.

It belongs to the P-Pant transferase superfamily. AcpS family. Mg(2+) is required as a cofactor.

It is found in the cytoplasm. The enzyme catalyses apo-[ACP] + CoA = holo-[ACP] + adenosine 3',5'-bisphosphate + H(+). Functionally, transfers the 4'-phosphopantetheine moiety from coenzyme A to a Ser of acyl-carrier-protein. The polypeptide is Holo-[acyl-carrier-protein] synthase (Chloroherpeton thalassium (strain ATCC 35110 / GB-78)).